The following is an 86-amino-acid chain: Small ribosomal subunit protein uS17 (86 aa).

The protein belongs to the universal ribosomal protein uS17 family. Part of the 30S ribosomal subunit.

One of the primary rRNA binding proteins, it binds specifically to the 5'-end of 16S ribosomal RNA. The protein is Small ribosomal subunit protein uS17 of Streptococcus mutans serotype c (strain ATCC 700610 / UA159).